A 635-amino-acid chain; its full sequence is Threonine--tRNA ligase (635 aa).

The region spanning 1–61 (MINISFPDGS…DNDCKLRILT (61 aa)) is the TGS domain. The interval 242–533 (DHRKLGRELD…LIEEYAGRFP (292 aa)) is catalytic. Residues Cys333, His384, and His510 each contribute to the Zn(2+) site.

This sequence belongs to the class-II aminoacyl-tRNA synthetase family. As to quaternary structure, homodimer. It depends on Zn(2+) as a cofactor.

Its subcellular location is the cytoplasm. The catalysed reaction is tRNA(Thr) + L-threonine + ATP = L-threonyl-tRNA(Thr) + AMP + diphosphate + H(+). Catalyzes the attachment of threonine to tRNA(Thr) in a two-step reaction: L-threonine is first activated by ATP to form Thr-AMP and then transferred to the acceptor end of tRNA(Thr). Also edits incorrectly charged L-seryl-tRNA(Thr). The protein is Threonine--tRNA ligase of Rickettsia peacockii (strain Rustic).